A 451-amino-acid chain; its full sequence is UDP-N-acetylmuramate--L-alanine ligase (451 aa).

Position 110-116 (110-116 (GTHGKTT)) interacts with ATP.

Belongs to the MurCDEF family.

Its subcellular location is the cytoplasm. It catalyses the reaction UDP-N-acetyl-alpha-D-muramate + L-alanine + ATP = UDP-N-acetyl-alpha-D-muramoyl-L-alanine + ADP + phosphate + H(+). It participates in cell wall biogenesis; peptidoglycan biosynthesis. In terms of biological role, cell wall formation. In Francisella tularensis subsp. tularensis (strain WY96-3418), this protein is UDP-N-acetylmuramate--L-alanine ligase.